Reading from the N-terminus, the 39-residue chain is Photosystem II reaction center protein L (39 aa).

Residues 18–38 (SLYLGLLLVFVLGILFSSYFF) form a helical membrane-spanning segment.

Belongs to the PsbL family. In terms of assembly, PSII is composed of 1 copy each of membrane proteins PsbA, PsbB, PsbC, PsbD, PsbE, PsbF, PsbH, PsbI, PsbJ, PsbK, PsbL, PsbM, PsbT, PsbX, PsbY, PsbZ, Psb30/Ycf12, peripheral proteins PsbO, CyanoQ (PsbQ), PsbU, PsbV and a large number of cofactors. It forms dimeric complexes.

It localises to the cellular thylakoid membrane. Its function is as follows. One of the components of the core complex of photosystem II (PSII). PSII is a light-driven water:plastoquinone oxidoreductase that uses light energy to abstract electrons from H(2)O, generating O(2) and a proton gradient subsequently used for ATP formation. It consists of a core antenna complex that captures photons, and an electron transfer chain that converts photonic excitation into a charge separation. This subunit is found at the monomer-monomer interface and is required for correct PSII assembly and/or dimerization. The chain is Photosystem II reaction center protein L from Trichormus variabilis (strain ATCC 29413 / PCC 7937) (Anabaena variabilis).